The chain runs to 465 residues: COP9 signalosome complex subunit 5 (465 aa).

The region spanning 74–216 (VLLSKLACSK…IGSFRTYQDQ (143 aa)) is the MPN domain. His-162, His-164, and Asp-175 together coordinate Zn(2+). The short motif at 162–175 (HSHPGYDCWLSNID) is the JAMM motif element. The tract at residues 364-386 (SSIHTQMNNQNNQQERNSPKRPH) is disordered.

Belongs to the peptidase M67A family. CSN5 subfamily. In terms of assembly, component of the COP9 signalosome (CSN) complex.

It is found in the cytoplasm. The protein localises to the nucleus. Catalytic Component of the COP9 signalosome (CSN) complex that acts as an regulator of the ubiquitin (Ubl) conjugation pathway by mediating the deneddylation of the cullin subunit of SCF-type E3 ubiquitin-protein ligase complexes. The polypeptide is COP9 signalosome complex subunit 5 (RRI1) (Candida glabrata (strain ATCC 2001 / BCRC 20586 / JCM 3761 / NBRC 0622 / NRRL Y-65 / CBS 138) (Yeast)).